A 498-amino-acid chain; its full sequence is Ammonium transporter 3 member 1 (498 aa).

The next 11 membrane-spanning stretches (helical) occupy residues 33-53 (ISATLVGMQSVPGLVILYGSI), 58-78 (WAVNSAFMALYAFAAVWLCWV), 143-163 (MVYFQCVFAAITLILLAGSLL), 171-191 (WMLFVPLWLTFSYTVGAFSLW), 206-226 (GGYVIHLSSGVAGFTAAYWVG), 241-261 (VLLMLTGAGILWMGWAGFNGG), 276-296 (NTNICAATSLLVWTCLDVIFF), 301-321 (VIGAVQGMITGLVCITPGAGL), 325-345 (WAAIVMGILSGSIPWFTMMVV), 369-389 (GFLGGATTGLFAEPVLCSLFL), and 412-432 (VAGALFIICWNVVVTSLVCLA). Residues 478–498 (DNNDTHHNNNKAAPSGVTQNV) are disordered. Over residues 487-498 (NKAAPSGVTQNV) the composition is skewed to polar residues.

It belongs to the ammonia transporter channel (TC 1.A.11.2) family. In terms of tissue distribution, expressed in root.

It is found in the membrane. In terms of biological role, involved in ammonium transport. In Oryza sativa subsp. japonica (Rice), this protein is Ammonium transporter 3 member 1 (AMT3-1).